The following is an 841-amino-acid chain: Probable inorganic carbon transporter subunit DabA 1 (841 aa).

4 residues coordinate Zn(2+): cysteine 352, aspartate 354, histidine 536, and cysteine 551.

This sequence belongs to the inorganic carbon transporter (TC 9.A.2) DabA family. In terms of assembly, forms a complex with DabB. It depends on Zn(2+) as a cofactor.

Its subcellular location is the cell inner membrane. Functionally, part of an energy-coupled inorganic carbon pump. This is Probable inorganic carbon transporter subunit DabA 1 from Bradyrhizobium sp. (strain ORS 278).